Here is a 278-residue protein sequence, read N- to C-terminus: Shikimate dehydrogenase (NADP(+)) (278 aa).

Shikimate is bound by residues 23–25 (SRS) and Thr70. The Proton acceptor role is filled by Lys74. Position 86 (Glu86) interacts with NADP(+). Shikimate contacts are provided by Asn95 and Asp110. NADP(+)-binding positions include 135-139 (GAGGA), 159-164 (NRTKEK), and Met224. Tyr226 provides a ligand contact to shikimate. NADP(+) is bound at residue Gly248.

The protein belongs to the shikimate dehydrogenase family. Homodimer.

It carries out the reaction shikimate + NADP(+) = 3-dehydroshikimate + NADPH + H(+). Its pathway is metabolic intermediate biosynthesis; chorismate biosynthesis; chorismate from D-erythrose 4-phosphate and phosphoenolpyruvate: step 4/7. Its function is as follows. Involved in the biosynthesis of the chorismate, which leads to the biosynthesis of aromatic amino acids. Catalyzes the reversible NADPH linked reduction of 3-dehydroshikimate (DHSA) to yield shikimate (SA). This Alcanivorax borkumensis (strain ATCC 700651 / DSM 11573 / NCIMB 13689 / SK2) protein is Shikimate dehydrogenase (NADP(+)).